We begin with the raw amino-acid sequence, 149 residues long: NPC intracellular cholesterol transporter 2 (149 aa).

Positions 1–21 (MRLLVAAFLLLALGDLGPGGA) are cleaved as a signal peptide. 3 disulfide bridges follow: C27–C140, C42–C47, and C93–C99. A glycan (N-linked (GlcNAc...) asparagine) is linked at N58. The residue at position 116 (K116) is an N6-acetyllysine.

It belongs to the NPC2 family. As to quaternary structure, interacts with NPC1 (via the second lumenal domain) in a cholestrol-dependent manner. Interacts with NUS1/NgBR, the interaction stabilizes NCP2 and regulates cholesterol trafficking. Interacts with DHDDS. Interacts with NEDD4L (via C2 domain). Interacts with NPC1L1. In terms of tissue distribution, epididymis. High levels are found in the caput and corpus regions. Weaker levels in the distal cauda and in the efferent ducts.

The protein localises to the secreted. The protein resides in the endoplasmic reticulum. Its subcellular location is the lysosome. It catalyses the reaction cholesterol(in) = cholesterol(out). Functionally, intracellular cholesterol transporter which acts in concert with NPC1 and plays an important role in the egress of cholesterol from the lysosomal compartment. Unesterified cholesterol that has been released from LDLs in the lumen of the late endosomes/lysosomes is transferred by NPC2 to the cholesterol-binding pocket in the N-terminal domain of NPC1. May bind and mobilize cholesterol that is associated with membranes. NPC2 binds cholesterol with a 1:1 stoichiometry. Can bind a variety of sterols, including lathosterol, desmosterol and the plant sterols stigmasterol and beta-sitosterol. The secreted form of NCP2 regulates biliary cholesterol secretion via stimulation of ABCG5/ABCG8-mediated cholesterol transport. This Canis lupus familiaris (Dog) protein is NPC intracellular cholesterol transporter 2.